The chain runs to 278 residues: Shikimate dehydrogenase (NADP(+)) (278 aa).

Shikimate contacts are provided by residues 19 to 21 (SRS) and threonine 66. Lysine 70 acts as the Proton acceptor in catalysis. 2 residues coordinate shikimate: asparagine 91 and aspartate 106. NADP(+) is bound by residues 129–133 (GAGGA) and phenylalanine 221. Residue tyrosine 223 coordinates shikimate. Glycine 242 contacts NADP(+).

This sequence belongs to the shikimate dehydrogenase family. In terms of assembly, homodimer.

It catalyses the reaction shikimate + NADP(+) = 3-dehydroshikimate + NADPH + H(+). Its pathway is metabolic intermediate biosynthesis; chorismate biosynthesis; chorismate from D-erythrose 4-phosphate and phosphoenolpyruvate: step 4/7. In terms of biological role, involved in the biosynthesis of the chorismate, which leads to the biosynthesis of aromatic amino acids. Catalyzes the reversible NADPH linked reduction of 3-dehydroshikimate (DHSA) to yield shikimate (SA). The sequence is that of Shikimate dehydrogenase (NADP(+)) from Anaeromyxobacter dehalogenans (strain 2CP-1 / ATCC BAA-258).